The primary structure comprises 250 residues: 2,3-bisphosphoglycerate-dependent phosphoglycerate mutase (250 aa).

Residues 10 to 17, 23 to 24, R62, 89 to 92, K100, 116 to 117, and 185 to 186 each bind substrate; these read RHGESQWN, TG, ERHY, RR, and GN. H11 (tele-phosphohistidine intermediate) is an active-site residue. E89 (proton donor/acceptor) is an active-site residue.

The protein belongs to the phosphoglycerate mutase family. BPG-dependent PGAM subfamily. Homodimer.

The catalysed reaction is (2R)-2-phosphoglycerate = (2R)-3-phosphoglycerate. It functions in the pathway carbohydrate degradation; glycolysis; pyruvate from D-glyceraldehyde 3-phosphate: step 3/5. In terms of biological role, catalyzes the interconversion of 2-phosphoglycerate and 3-phosphoglycerate. This Serratia proteamaculans (strain 568) protein is 2,3-bisphosphoglycerate-dependent phosphoglycerate mutase.